We begin with the raw amino-acid sequence, 219 residues long: Probable glutathione S-transferase GSTF1 (219 aa).

The 82-residue stretch at 2–83 (TPVKVFGPAQ…YILRKYKTRE (82 aa)) folds into the GST N-terminal domain. Glutathione contacts are provided by residues Ser12, 41–42 (HK), 54–55 (QI), and 67–68 (ES). The GST C-terminal domain occupies 91–219 (NLREAAMVDV…LAAVMAPQGA (129 aa)).

It belongs to the GST superfamily. Phi family. In terms of tissue distribution, constitutively expressed in roots.

The catalysed reaction is RX + glutathione = an S-substituted glutathione + a halide anion + H(+). In terms of biological role, conjugation of reduced glutathione to a wide number of exogenous and endogenous hydrophobic electrophiles. This Oryza sativa subsp. japonica (Rice) protein is Probable glutathione S-transferase GSTF1 (GSTF1).